We begin with the raw amino-acid sequence, 1369 residues long: DNA-directed RNA polymerase subunit beta (1369 aa).

Belongs to the RNA polymerase beta chain family. As to quaternary structure, the RNAP catalytic core consists of 2 alpha, 1 beta, 1 beta' and 1 omega subunit. When a sigma factor is associated with the core the holoenzyme is formed, which can initiate transcription.

The enzyme catalyses RNA(n) + a ribonucleoside 5'-triphosphate = RNA(n+1) + diphosphate. Functionally, DNA-dependent RNA polymerase catalyzes the transcription of DNA into RNA using the four ribonucleoside triphosphates as substrates. The polypeptide is DNA-directed RNA polymerase subunit beta (Solidesulfovibrio magneticus (strain ATCC 700980 / DSM 13731 / RS-1) (Desulfovibrio magneticus)).